The primary structure comprises 327 residues: Deoxynucleotidyltransferase terminal-interacting protein 1 (327 aa).

Positions 1-11 are enriched in gly residues; sequence MGATGDTGGPR. 2 disordered regions span residues 1–34 and 146–172; these read MGATGDTGGPRPGTESRRPGNVGNAGAAGQPVLT and KRGRQAEEESHREAPFPKRGKVGLPGH. Residues 55–146 form an important for dimerization region; the sequence is MTTSFTDPAI…RLAHELPGIK (92 aa). Over residues 146 to 161 the composition is skewed to basic and acidic residues; that stretch reads KRGRQAEEESHREAPF. The segment at residues 157 to 171 is a DNA-binding region (a.T hook); the sequence is REAPFPKRGKVGLPG. A Nuclear localization signal motif is present at residues 162-168; sequence PKRGKVG. The important for DNA and nucleosome binding stretch occupies residues 195–314; sequence REGPKWDPAR…MRKYMETLRT (120 aa). The segment at residues 214-235 is a DNA-binding region (H-T-H motif); it reads GSRANKALGMGGTRGRIYIKHP.

Monomer and homodimer. A minor proportion may form homotrimers. Interacts with ZNF541. Interacts with the terminal deoxynucleotidyltransferase DNTT. Interacts with TRERF1. Identified in a histone deacetylase complex that contains DNTTIP1, HDAC1 and MIDEAS; this complex assembles into a tetramer that contains four copies of each protein chain. Component of a histone deacetylase complex containing DNTTIP1, ZNF541, HDAC1 and HDAC2. Identified in a complex with KCTD19, HDAC1, HDAC2 and ZNF541. In terms of tissue distribution, expressed in thymus, bone marrow and spleen.

The protein localises to the nucleus. Its function is as follows. Increases DNTT terminal deoxynucleotidyltransferase activity (in vitro). Also acts as a transcriptional regulator, binding to the consensus sequence 5'-GNTGCATG-3' following an AT-tract. Associates with RAB20 promoter and positively regulates its transcription. Binds DNA and nucleosomes; may recruit HDAC1 complexes to nucleosomes or naked DNA. This is Deoxynucleotidyltransferase terminal-interacting protein 1 (Dnttip1) from Rattus norvegicus (Rat).